The primary structure comprises 497 residues: Probable cytosol aminopeptidase (497 aa).

2 residues coordinate Mn(2+): lysine 264 and aspartate 269. Lysine 276 is an active-site residue. Mn(2+)-binding residues include aspartate 287, aspartate 347, and glutamate 349. Arginine 351 is an active-site residue.

It belongs to the peptidase M17 family. It depends on Mn(2+) as a cofactor.

The protein localises to the cytoplasm. It carries out the reaction Release of an N-terminal amino acid, Xaa-|-Yaa-, in which Xaa is preferably Leu, but may be other amino acids including Pro although not Arg or Lys, and Yaa may be Pro. Amino acid amides and methyl esters are also readily hydrolyzed, but rates on arylamides are exceedingly low.. The catalysed reaction is Release of an N-terminal amino acid, preferentially leucine, but not glutamic or aspartic acids.. Presumably involved in the processing and regular turnover of intracellular proteins. Catalyzes the removal of unsubstituted N-terminal amino acids from various peptides. In Thermosynechococcus vestitus (strain NIES-2133 / IAM M-273 / BP-1), this protein is Probable cytosol aminopeptidase.